The sequence spans 171 residues: Co-chaperone protein HscB (171 aa).

Residues 2-74 (DYFTLFGLPA…LTRAEYLLSL (73 aa)) enclose the J domain.

Belongs to the HscB family. As to quaternary structure, interacts with HscA and stimulates its ATPase activity. Interacts with IscU.

In terms of biological role, co-chaperone involved in the maturation of iron-sulfur cluster-containing proteins. Seems to help targeting proteins to be folded toward HscA. The sequence is that of Co-chaperone protein HscB from Salmonella paratyphi A (strain AKU_12601).